The following is a 347-amino-acid chain: G-protein coupled receptor homolog U12 (347 aa).

The next 6 membrane-spanning stretches (helical) occupy residues 36–56 (GITLTTSIPMIIIVVTTMILY), 67–87 (FYVITLFASDFVLMWCVFFMT), 103–124 (LVYFIYHAVCSYSISMLAIIAT), 147–167 (IGILLLASSMCAIPTALFVKT), 194–214 (IVFSFIWGVLPTMVFSFFYVI), and 236–256 (ILLLSFLLIQIPYIAILICEI). Cysteine 101 and cysteine 176 are disulfide-bonded. Positions 321–347 (QKRKDSDASEHDQNSKSKASVEKNQPL) are disordered. Positions 322–341 (KRKDSDASEHDQNSKSKASV) are enriched in basic and acidic residues.

The protein belongs to the G-protein coupled receptor 1 family.

Its subcellular location is the membrane. In terms of biological role, probable G-protein coupled receptor. The polypeptide is G-protein coupled receptor homolog U12 (U12) (Homo sapiens (Human)).